The sequence spans 344 residues: Probable dual-specificity RNA methyltransferase RlmN (344 aa).

Residue E92 is the Proton acceptor of the active site. In terms of domain architecture, Radical SAM core spans 98-325 (DEDRATLCVS…TTIRASRGED (228 aa)). C105 and C330 form a disulfide bridge. [4Fe-4S] cluster is bound by residues C112, C116, and C119. Residues 157 to 158 (GE), S189, 211 to 213 (SLH), and H287 contribute to the S-adenosyl-L-methionine site. C330 functions as the S-methylcysteine intermediate in the catalytic mechanism.

This sequence belongs to the radical SAM superfamily. RlmN family. [4Fe-4S] cluster serves as cofactor.

The protein localises to the cytoplasm. It catalyses the reaction adenosine(2503) in 23S rRNA + 2 reduced [2Fe-2S]-[ferredoxin] + 2 S-adenosyl-L-methionine = 2-methyladenosine(2503) in 23S rRNA + 5'-deoxyadenosine + L-methionine + 2 oxidized [2Fe-2S]-[ferredoxin] + S-adenosyl-L-homocysteine. The catalysed reaction is adenosine(37) in tRNA + 2 reduced [2Fe-2S]-[ferredoxin] + 2 S-adenosyl-L-methionine = 2-methyladenosine(37) in tRNA + 5'-deoxyadenosine + L-methionine + 2 oxidized [2Fe-2S]-[ferredoxin] + S-adenosyl-L-homocysteine. Functionally, specifically methylates position 2 of adenine 2503 in 23S rRNA and position 2 of adenine 37 in tRNAs. The protein is Probable dual-specificity RNA methyltransferase RlmN of Bacteroides fragilis (strain ATCC 25285 / DSM 2151 / CCUG 4856 / JCM 11019 / LMG 10263 / NCTC 9343 / Onslow / VPI 2553 / EN-2).